We begin with the raw amino-acid sequence, 601 residues long: 1-deoxy-D-xylulose-5-phosphate synthase (601 aa).

Thiamine diphosphate is bound by residues His63 and 104-106 (GHS). Asp135 lines the Mg(2+) pocket. Thiamine diphosphate-binding positions include 136–137 (GS), Asn164, Tyr272, and Glu353. Asn164 contacts Mg(2+).

It belongs to the transketolase family. DXPS subfamily. Homodimer. Mg(2+) serves as cofactor. Requires thiamine diphosphate as cofactor.

It carries out the reaction D-glyceraldehyde 3-phosphate + pyruvate + H(+) = 1-deoxy-D-xylulose 5-phosphate + CO2. It functions in the pathway metabolic intermediate biosynthesis; 1-deoxy-D-xylulose 5-phosphate biosynthesis; 1-deoxy-D-xylulose 5-phosphate from D-glyceraldehyde 3-phosphate and pyruvate: step 1/1. In terms of biological role, catalyzes the acyloin condensation reaction between C atoms 2 and 3 of pyruvate and glyceraldehyde 3-phosphate to yield 1-deoxy-D-xylulose-5-phosphate (DXP). This Aliarcobacter butzleri (strain RM4018) (Arcobacter butzleri) protein is 1-deoxy-D-xylulose-5-phosphate synthase.